The following is a 537-amino-acid chain: Hydroxylamine reductase (537 aa).

[4Fe-4S] cluster is bound by residues Cys-3, Cys-6, Cys-15, and Cys-21. Hybrid [4Fe-2O-2S] cluster is bound by residues His-239, Glu-263, Cys-307, Cys-393, Cys-421, Cys-446, Glu-480, and Lys-482. At Cys-393 the chain carries Cysteine persulfide.

The protein belongs to the HCP family. [4Fe-4S] cluster is required as a cofactor. Hybrid [4Fe-2O-2S] cluster serves as cofactor.

It localises to the cytoplasm. It carries out the reaction A + NH4(+) + H2O = hydroxylamine + AH2 + H(+). In terms of biological role, catalyzes the reduction of hydroxylamine to form NH(3) and H(2)O. This chain is Hydroxylamine reductase, found in Lawsonia intracellularis (strain PHE/MN1-00).